The primary structure comprises 309 residues: Tagatose-6-phosphate kinase (309 aa).

This sequence belongs to the carbohydrate kinase PfkB family. LacC subfamily.

The enzyme catalyses D-tagatofuranose 6-phosphate + ATP = D-tagatofuranose 1,6-bisphosphate + ADP + H(+). It functions in the pathway carbohydrate metabolism; D-tagatose 6-phosphate degradation; D-glyceraldehyde 3-phosphate and glycerone phosphate from D-tagatose 6-phosphate: step 1/2. The protein is Tagatose-6-phosphate kinase of Streptococcus pneumoniae (strain ATCC 700669 / Spain 23F-1).